The chain runs to 376 residues: cAMP-dependent protein kinase type I regulatory subunit (376 aa).

The segment at Met-1–Val-131 is dimerization and phosphorylation. The segment at Pro-72–Gly-93 is disordered. Residues Arg-91–Ile-95 carry the Pseudophosphorylation motif motif. The residue at position 96 (Ser-96) is a Phosphoserine. 3',5'-cyclic AMP contacts are provided by residues Leu-132–Arg-247, Glu-197, Arg-206, Ile-250–Phe-371, Glu-321, and Arg-330.

Belongs to the cAMP-dependent kinase regulatory chain family. Tetramer, composed of 2 regulatory (R) and 2 catalytic (C) subunits. In the presence of cAMP it dissociates into 2 active monomeric C subunits and an R dimer. Post-translationally, the pseudophosphorylation site binds to the substrate-binding region of the catalytic chain but is not phosphorylated. The physiological significance of phosphorylations by other kinases is unclear.

The protein is cAMP-dependent protein kinase type I regulatory subunit (Pka-R1) of Drosophila melanogaster (Fruit fly).